A 423-amino-acid polypeptide reads, in one-letter code: Voltage-dependent calcium channel gamma-8 subunit (423 aa).

The next 4 helical transmembrane spans lie at 19–39, 127–147, 157–177, and 207–227; these read VQVL…TIAI, SSIF…CVAA, IILG…IGVI, and FGGL…NIYI. 2 positions are modified to phosphoserine: Ser-251 and Ser-254. Positions 271–304 are disordered; it reads RRSRSSSRGSSEASPSRDASPGGPGGPGFASTDI. Residues 276-287 are compositionally biased toward low complexity; the sequence is SSRGSSEASPSR. The chain crosses the membrane as a helical span at residues 318-338; that stretch reads VAAGLASAGGGGSGAGVGAYG. 2 disordered regions span residues 342–363 and 378–423; these read GAAG…GFLT and VTVT…TTPV. Residues 384–399 are compositionally biased toward pro residues; the sequence is PAAPAPAPAPPAPAAP. A compositionally biased stretch (polar residues) spans 410–423; that stretch reads ASNTNTLNRKTTPV.

This sequence belongs to the PMP-22/EMP/MP20 family. CACNG subfamily. Interacts with CACNA1C. Identified in a complex with the L-type calcium channel subunits CACNA1C, CACNA2D1 and either CACNB1 or CACNB2. Acts as an auxiliary subunit for AMPA-selective glutamate receptors (AMPARs). Found in a complex with GRIA1, GRIA2, GRIA3, GRIA4, CNIH2, CNIH3, CACNG2, CACNG3, CACNG4, CACNG5 and CACNG7. Interacts with CNIH2. Found in a complex with GRIA1, GRIA2, GRIA3, GRIA4, DLG4 and CNIH2. In terms of processing, palmitoylated. Probably palmitoylated by ZDHHC3 and ZDHHC7.

It localises to the cell membrane. It is found in the postsynaptic density membrane. Its function is as follows. Regulates the activity of L-type calcium channels that contain CACNA1C as pore-forming subunit. Regulates the trafficking and gating properties of AMPA-selective glutamate receptors (AMPARs). Promotes their targeting to the cell membrane and synapses and modulates their gating properties by slowing their rates of activation, deactivation and desensitization and by mediating their resensitization. Does not show subunit-specific AMPA receptor regulation and regulates all AMPAR subunits. Thought to stabilize the calcium channel in an inactivated (closed) state. In Mus musculus (Mouse), this protein is Voltage-dependent calcium channel gamma-8 subunit.